Consider the following 340-residue polypeptide: Photosystem II protein D1 (340 aa).

Helical transmembrane passes span tyrosine 25–valine 42, histidine 114–phenylalanine 129, and tryptophan 138–alanine 152. A chlorophyll a-binding site is contributed by histidine 114. Tryptophan 122 provides a ligand contact to pheophytin a. Positions 166 and 185 each coordinate [CaMn4O5] cluster. The helical transmembrane segment at phenylalanine 193 to leucine 214 threads the bilayer. A chlorophyll a-binding site is contributed by histidine 194. A quinone-binding positions include histidine 211 and serine 260–phenylalanine 261. Residue histidine 211 participates in Fe cation binding. Histidine 268 is a binding site for Fe cation. A helical membrane pass occupies residues phenylalanine 270–leucine 284. Positions 328, 329, 338, and 340 each coordinate [CaMn4O5] cluster.

Belongs to the reaction center PufL/M/PsbA/D family. In terms of assembly, PSII is composed of 1 copy each of membrane proteins PsbA, PsbB, PsbC, PsbD, PsbE, PsbF, PsbH, PsbI, PsbJ, PsbK, PsbL, PsbM, PsbT, PsbX, PsbY, PsbZ, Psb30/Ycf12, at least 3 peripheral proteins of the oxygen-evolving complex and a large number of cofactors. It forms dimeric complexes. It depends on The D1/D2 heterodimer binds P680, chlorophylls that are the primary electron donor of PSII, and subsequent electron acceptors. It shares a non-heme iron and each subunit binds pheophytin, quinone, additional chlorophylls, carotenoids and lipids. D1 provides most of the ligands for the Mn4-Ca-O5 cluster of the oxygen-evolving complex (OEC). There is also a Cl(-1) ion associated with D1 and D2, which is required for oxygen evolution. The PSII complex binds additional chlorophylls, carotenoids and specific lipids. as a cofactor. In terms of processing, tyr-157 forms a radical intermediate that is referred to as redox-active TyrZ, YZ or Y-Z.

It is found in the plastid. The protein resides in the chloroplast thylakoid membrane. The catalysed reaction is 2 a plastoquinone + 4 hnu + 2 H2O = 2 a plastoquinol + O2. In terms of biological role, photosystem II (PSII) is a light-driven water:plastoquinone oxidoreductase that uses light energy to abstract electrons from H(2)O, generating O(2) and a proton gradient subsequently used for ATP formation. It consists of a core antenna complex that captures photons, and an electron transfer chain that converts photonic excitation into a charge separation. The D1/D2 (PsbA/PsbD) reaction center heterodimer binds P680, the primary electron donor of PSII as well as several subsequent electron acceptors. This Amphidinium carterae (Dinoflagellate) protein is Photosystem II protein D1.